A 148-amino-acid polypeptide reads, in one-letter code: Glutamyl-tRNA(Gln) amidotransferase subunit C, mitochondrial (148 aa).

It belongs to the GatC family. Subunit of the heterotrimeric GatCAB amidotransferase (AdT) complex, composed of A, B and C subunits.

Its subcellular location is the mitochondrion. The catalysed reaction is L-glutamyl-tRNA(Gln) + L-glutamine + ATP + H2O = L-glutaminyl-tRNA(Gln) + L-glutamate + ADP + phosphate + H(+). Functionally, allows the formation of correctly charged Gln-tRNA(Gln) through the transamidation of misacylated Glu-tRNA(Gln) in the mitochondria. The reaction takes place in the presence of glutamine and ATP through an activated gamma-phospho-Glu-tRNA(Gln). The chain is Glutamyl-tRNA(Gln) amidotransferase subunit C, mitochondrial from Drosophila sechellia (Fruit fly).